The following is a 185-amino-acid chain: Celestoxin (185 aa).

Positions 1–20 are cleaved as a signal peptide; the sequence is MKFIAAVLLVALLCPKDSTS. Residues 21–148 constitute a propeptide that is removed on maturation; it reads LASRLSGLLG…GLPVALPVSV (128 aa).

As to expression, expressed by the mandibular venom gland.

It localises to the secreted. Functionally, has a hypotensive activity. This Caribicus warreni (Haitian giant galliwasp) protein is Celestoxin.